We begin with the raw amino-acid sequence, 655 residues long: MGIFSIANQHIRFAVKLATAIVLALFVGFHFQLETPRWAVLTAAIVAAGPAFAAGGEPYSGAIRYRGFLRIIGTFIGCIAGLVIIIAMIRAPLLMILVCCIWAGFCTWISSLVRIENSYAWGLAGYTALIIVITIQPEPLLTPQFAVERCSEIVIGIVCAIMADLLFSPRSIKQEVDRELESLLVAQYQLMQLCIKHGDGEVVDKAWGDLVRRTTALQGMRSNLNMESSRWARANRRLKAINTLSLTLITQSCETYLIQNTRPELITDTFREFFDTPVETAQDVHKQLKRLRRVIAWTGERETPVTIYSWVAAATRYQLLKRGVISNTKINATEEEILQGEPEVKVESAERHHAMVNFWRTTLSCILGTLFWLWTGWTSGSGAMVMIAVVTSLAMRLPNPRMVAIDFIYGTLAALPLGLLYFLVIIPNTQQSMLLLCISLAVLGFFLGIEVQKRRLGSMGALASTINIIVLDNPMTFHFSQFLDSALGQIVGCVLAFTVILLVRDKSRDRTGRVLLNQFVFAAVSAMTTNVARRKENHLPALYQQLFLLMNKFPGDLPKFRLALTMIIAHQRLRDAPIPVNEDLSAFHRQMRRTADHVISARSDDKRRRYFGQLLEELEIYQEKLRIWQAPPQVTEPVHRLAGMLHKYQHALTDS.

Transmembrane regions (helical) follow at residues 13-33 (FAVKLATAIVLALFVGFHFQL), 38-58 (WAVLTAAIVAAGPAFAAGGEP), 69-89 (LRIIGTFIGCIAGLVIIIAMI), 93-113 (LLMILVCCIWAGFCTWISSLV), 121-141 (WGLAGYTALIIVITIQPEPLL), 152-172 (EIVIGIVCAIMADLLFSPRSI), 370-390 (LFWLWTGWTSGSGAMVMIAVV), 407-427 (FIYGTLAALPLGLLYFLVIIP), 431-451 (QSMLLLCISLAVLGFFLGIEV), 459-479 (MGALASTINIIVLDNPMTFHF), and 482-502 (FLDSALGQIVGCVLAFTVILL).

Belongs to the aromatic acid exporter ArAE (TC 2.A.85) family.

Its subcellular location is the cell inner membrane. Functionally, forms an efflux pump with AaeA. Could function as a metabolic relief valve, allowing to eliminate certain compounds when they accumulate to high levels in the cell. This is p-hydroxybenzoic acid efflux pump subunit AaeB from Shigella sonnei (strain Ss046).